A 376-amino-acid polypeptide reads, in one-letter code: 26S proteasome non-ATPase regulatory subunit 13 (376 aa).

Residues 171–338 form the PCI domain; that stretch reads SYYKDALRFL…KRVHMTWVQP (168 aa). An N6-acetyllysine modification is found at lysine 298.

Belongs to the proteasome subunit S11 family. As to quaternary structure, component of the 19S proteasome regulatory particle complex. The 26S proteasome consists of a 20S core particle (CP) and two 19S regulatory subunits (RP). The regulatory particle is made of a lid composed of 9 subunits including PSMD13, a base containing 6 ATPases and few additional components.

Functionally, component of the 26S proteasome, a multiprotein complex involved in the ATP-dependent degradation of ubiquitinated proteins. This complex plays a key role in the maintenance of protein homeostasis by removing misfolded or damaged proteins, which could impair cellular functions, and by removing proteins whose functions are no longer required. Therefore, the proteasome participates in numerous cellular processes, including cell cycle progression, apoptosis, or DNA damage repair. This Rattus norvegicus (Rat) protein is 26S proteasome non-ATPase regulatory subunit 13.